We begin with the raw amino-acid sequence, 92 residues long: Small ribosomal subunit protein uS19 (92 aa).

It belongs to the universal ribosomal protein uS19 family.

Protein S19 forms a complex with S13 that binds strongly to the 16S ribosomal RNA. In Brucella anthropi (strain ATCC 49188 / DSM 6882 / CCUG 24695 / JCM 21032 / LMG 3331 / NBRC 15819 / NCTC 12168 / Alc 37) (Ochrobactrum anthropi), this protein is Small ribosomal subunit protein uS19.